The following is a 262-amino-acid chain: Cytochrome c oxidase subunit 2 (262 aa).

The next 2 helical transmembrane spans lie at 31-51 (HIMFYLCLILGLVSYILYVII) and 72-92 (IIWTIFPAVILLLIAFPSFIL). Histidine 175, cysteine 210, glutamate 212, cysteine 214, histidine 218, and methionine 221 together coordinate Cu cation. Residue glutamate 212 participates in Mg(2+) binding.

It belongs to the cytochrome c oxidase subunit 2 family. In terms of assembly, component of the cytochrome c oxidase (complex IV, CIV), a multisubunit enzyme composed of a catalytic core of 3 subunits and several supernumerary subunits. The complex exists as a monomer or a dimer and forms supercomplexes (SCs) in the inner mitochondrial membrane with ubiquinol-cytochrome c oxidoreductase (cytochrome b-c1 complex, complex III, CIII). It depends on Cu cation as a cofactor.

It localises to the mitochondrion inner membrane. It catalyses the reaction 4 Fe(II)-[cytochrome c] + O2 + 8 H(+)(in) = 4 Fe(III)-[cytochrome c] + 2 H2O + 4 H(+)(out). Its function is as follows. Component of the cytochrome c oxidase, the last enzyme in the mitochondrial electron transport chain which drives oxidative phosphorylation. The respiratory chain contains 3 multisubunit complexes succinate dehydrogenase (complex II, CII), ubiquinol-cytochrome c oxidoreductase (cytochrome b-c1 complex, complex III, CIII) and cytochrome c oxidase (complex IV, CIV), that cooperate to transfer electrons derived from NADH and succinate to molecular oxygen, creating an electrochemical gradient over the inner membrane that drives transmembrane transport and the ATP synthase. Cytochrome c oxidase is the component of the respiratory chain that catalyzes the reduction of oxygen to water. Electrons originating from reduced cytochrome c in the intermembrane space (IMS) are transferred via the dinuclear copper A center (CU(A)) of subunit 2 and heme A of subunit 1 to the active site in subunit 1, a binuclear center (BNC) formed by heme A3 and copper B (CU(B)). The BNC reduces molecular oxygen to 2 water molecules using 4 electrons from cytochrome c in the IMS and 4 protons from the mitochondrial matrix. The polypeptide is Cytochrome c oxidase subunit 2 (COX2) (Candida albicans (strain SC5314 / ATCC MYA-2876) (Yeast)).